We begin with the raw amino-acid sequence, 207 residues long: Ribosomal RNA small subunit methyltransferase G (207 aa).

S-adenosyl-L-methionine is bound by residues Gly73, Leu78, 124–125 (VE), and Arg139.

It belongs to the methyltransferase superfamily. RNA methyltransferase RsmG family.

Its subcellular location is the cytoplasm. The catalysed reaction is guanosine(527) in 16S rRNA + S-adenosyl-L-methionine = N(7)-methylguanosine(527) in 16S rRNA + S-adenosyl-L-homocysteine. Functionally, specifically methylates the N7 position of guanine in position 527 of 16S rRNA. This Shigella flexneri protein is Ribosomal RNA small subunit methyltransferase G.